A 173-amino-acid chain; its full sequence is RNA pyrophosphohydrolase (173 aa).

Residues 6–149 (GFRANVGIII…KRDVYRKVMK (144 aa)) enclose the Nudix hydrolase domain. Residues 38 to 59 (GGVDDGETPEEAMYRELYEEVG) carry the Nudix box motif.

The protein belongs to the Nudix hydrolase family. RppH subfamily. A divalent metal cation serves as cofactor.

In terms of biological role, accelerates the degradation of transcripts by removing pyrophosphate from the 5'-end of triphosphorylated RNA, leading to a more labile monophosphorylated state that can stimulate subsequent ribonuclease cleavage. The polypeptide is RNA pyrophosphohydrolase (Shewanella woodyi (strain ATCC 51908 / MS32)).